Reading from the N-terminus, the 351-residue chain is Dihydroorotate dehydrogenase (quinone) (351 aa).

FMN contacts are provided by residues 67–71 (AGFDK) and Thr-91. Position 71 (Lys-71) interacts with substrate. 116 to 120 (NAMGF) is a binding site for substrate. Asn-145 and Asn-178 together coordinate FMN. Asn-178 lines the substrate pocket. Catalysis depends on Ser-181, which acts as the Nucleophile. Asn-183 lines the substrate pocket. 2 residues coordinate FMN: Lys-214 and Thr-242. 243 to 244 (NT) serves as a coordination point for substrate. FMN is bound by residues Gly-262, Gly-291, and 312–313 (YS).

This sequence belongs to the dihydroorotate dehydrogenase family. Type 2 subfamily. Monomer. FMN is required as a cofactor.

It localises to the cell membrane. It carries out the reaction (S)-dihydroorotate + a quinone = orotate + a quinol. It participates in pyrimidine metabolism; UMP biosynthesis via de novo pathway; orotate from (S)-dihydroorotate (quinone route): step 1/1. Its function is as follows. Catalyzes the conversion of dihydroorotate to orotate with quinone as electron acceptor. The chain is Dihydroorotate dehydrogenase (quinone) from Helicobacter pylori (strain G27).